Reading from the N-terminus, the 268-residue chain is Tryptophan synthase alpha chain (268 aa).

Residues Glu49 and Asp60 each act as proton acceptor in the active site.

It belongs to the TrpA family. In terms of assembly, tetramer of two alpha and two beta chains.

The enzyme catalyses (1S,2R)-1-C-(indol-3-yl)glycerol 3-phosphate + L-serine = D-glyceraldehyde 3-phosphate + L-tryptophan + H2O. The protein operates within amino-acid biosynthesis; L-tryptophan biosynthesis; L-tryptophan from chorismate: step 5/5. Functionally, the alpha subunit is responsible for the aldol cleavage of indoleglycerol phosphate to indole and glyceraldehyde 3-phosphate. This chain is Tryptophan synthase alpha chain, found in Haemophilus influenzae (strain ATCC 51907 / DSM 11121 / KW20 / Rd).